Here is a 595-residue protein sequence, read N- to C-terminus: D-xylonate dehydratase (595 aa).

Cys-64 is a [2Fe-2S] cluster binding site. Glu-96 lines the Mg(2+) pocket. Residue Cys-132 participates in [2Fe-2S] cluster binding. Asp-133 contacts Mg(2+). Cys-205 is a binding site for [2Fe-2S] cluster. Glu-467 contributes to the Mg(2+) binding site.

It belongs to the IlvD/Edd family. Homotetramer. [2Fe-2S] cluster is required as a cofactor. It depends on Mg(2+) as a cofactor.

It carries out the reaction D-xylonate = 2-dehydro-3-deoxy-D-arabinonate + H2O. It catalyses the reaction D-gluconate = 2-dehydro-3-deoxy-D-gluconate + H2O. It participates in carbohydrate metabolism; D-xylose degradation. Catalyzes the dehydration of D-xylonate to 2-dehydro-3-deoxy-D-arabinonate during D-xylose degradation. Can also dehydrate D-gluconate, with similar catalytic efficiency. Has weak activity with D-galactonate, D-fuconate and L-arabinonate. In Caulobacter vibrioides (strain ATCC 19089 / CIP 103742 / CB 15) (Caulobacter crescentus), this protein is D-xylonate dehydratase.